An 85-amino-acid polypeptide reads, in one-letter code: UPF0291 protein str0508 (85 aa).

Residues 62 to 85 (TPEKLRQVQREKGLHGRSLDDPES) are disordered.

It belongs to the UPF0291 family.

Its subcellular location is the cytoplasm. This Streptococcus thermophilus (strain CNRZ 1066) protein is UPF0291 protein str0508.